Reading from the N-terminus, the 296-residue chain is dTDP-4-dehydrorhamnose reductase (296 aa).

Residues Gly10–Ile12, Asp35–Leu36, and Ala59–Thr61 each bind NADH. Residues Gln11–Ile12, Asp35–Leu36, and Ala59–Thr61 each bind NADPH. Thr100–Asp101 contacts dTDP-beta-L-rhamnose. NADH contacts are provided by Tyr124 and Lys128. Positions 124 and 128 each coordinate NADPH. Tyr124 serves as the catalytic Proton donor/acceptor. Trp149 contributes to the dTDP-beta-L-rhamnose binding site.

This sequence belongs to the dTDP-4-dehydrorhamnose reductase family. As to quaternary structure, homodimer. Requires Mg(2+) as cofactor.

The enzyme catalyses dTDP-beta-L-rhamnose + NADP(+) = dTDP-4-dehydro-beta-L-rhamnose + NADPH + H(+). The protein operates within carbohydrate biosynthesis; dTDP-L-rhamnose biosynthesis. Functionally, involved in the biosynthesis of the dTDP-L-rhamnose which is an important component of lipopolysaccharide (LPS). Catalyzes the reduction of dTDP-6-deoxy-L-lyxo-4-hexulose to yield dTDP-L-rhamnose. RmlD uses NADH and NADPH nearly equally well. The protein is dTDP-4-dehydrorhamnose reductase of Sinorhizobium fredii (strain NBRC 101917 / NGR234).